Consider the following 153-residue polypeptide: Natriuretic peptides A (153 aa).

The N-terminal stretch at 1 to 25 (MGSFSTITASFLLFLACQLLWQTGA) is a signal peptide. 2 propeptides span residues 26 to 123 (NPVY…AAPR) and 93 to 103 (DGGALGRGSWD). Positions 62-104 (VLSEQNEEAGAALSPLPEVPPWAGEVNPAQRDGGALGRGSWDS) are disordered. S129 carries the post-translational modification Phosphoserine. Cysteines 130 and 146 form a disulfide. The segment at 147 to 151 (NSFRY) is important for degradation of atrial natriuretic peptide by IDE.

This sequence belongs to the natriuretic peptide family. As to quaternary structure, homodimer; disulfide-linked antiparallel dimer. In terms of processing, the precursor molecule is proteolytically cleaved by CORIN at Arg-123 to produce the atrial natriuretic peptide. Undergoes further proteolytic cleavage by unknown proteases to give rise to long-acting natriuretic peptide, vessel dilator and kaliuretic peptide. Additional processing gives rise to the auriculin and atriopeptin peptides. In the kidneys, alternative processing by an unknown protease results in the peptide urodilatin. Cleavage by MME initiates degradation of the factor and thereby regulates its activity. Degradation by IDE results in reduced activation of NPR1 (in vitro). During IDE degradation, the resulting products can temporarily stimulate NPR2 to produce cGMP, before the fragments are completely degraded and inactivated by IDE (in vitro). Post-translationally, degraded by IDE. In terms of processing, phosphorylation on Ser-129 decreases vasorelaxant activity.

Its subcellular location is the secreted. It localises to the perikaryon. It is found in the cell projection. Its function is as follows. Hormone that plays a key role in mediating cardio-renal homeostasis, and is involved in vascular remodeling and regulating energy metabolism. Acts by specifically binding and stimulating NPR1 to produce cGMP, which in turn activates effector proteins, such as PRKG1, that drive various biological responses. Regulates vasodilation, natriuresis, diuresis and aldosterone synthesis and is therefore essential for regulating blood pressure, controlling the extracellular fluid volume and maintaining the fluid-electrolyte balance. Also involved in inhibiting cardiac remodeling and cardiac hypertrophy by inducing cardiomyocyte apoptosis and attenuating the growth of cardiomyocytes and fibroblasts. Plays a role in female pregnancy by promoting trophoblast invasion and spiral artery remodeling in uterus, and thus prevents pregnancy-induced hypertension. In adipose tissue, acts in various cGMP- and PKG-dependent pathways to regulate lipid metabolism and energy homeostasis. This includes up-regulating lipid metabolism and mitochondrial oxygen utilization by activating the AMP-activated protein kinase (AMPK), and increasing energy expenditure by acting via MAPK11 to promote the UCP1-dependent thermogenesis of brown adipose tissue. Binds the clearance receptor NPR3 which removes the hormone from circulation. In terms of biological role, may have a role in cardio-renal homeostasis through regulation of natriuresis, diuresis, vasodilation, and inhibiting aldosterone synthesis. In vitro, promotes the production of cGMP and induces vasodilation. May promote natriuresis, at least in part, by enhancing prostaglandin E2 synthesis resulting in the inhibition of renal Na+-K+-ATPase. However reports on the involvement of this peptide in mammal blood volume and blood pressure homeostasis are conflicting; according to a report, in vivo it is not sufficient to activate cGMP and does not inhibit collecting duct transport nor effect diuresis and natriuresis. Appears to bind to specific receptors that are distinct from the receptors bound by atrial natriuretic peptide and vessel dilator. Possibly enhances protein excretion in urine by decreasing proximal tubular protein reabsorption. May have a role in cardio-renal homeostasis through regulation of natriuresis, diuresis, and vasodilation. In vitro, promotes the production of cGMP and induces vasodilation. May promote natriuresis, at least in part, by enhancing prostaglandin E2 synthesis resulting in the inhibition of renal Na+-K+-ATPase. However reports on the involvement of this peptide in mammal blood volume and blood pressure homeostasis are conflicting; according to a report it is not sufficient to activate cGMP and does not inhibit collecting duct transport nor effect diuresis and natriuresis. Appears to bind to specific receptors that are distinct from the receptors bound by the atrial natriuretic and long-acting natriuretic peptides. Possibly functions in protein excretion in urine by maintaining the integrity of the proximal tubules and enhancing protein excretion by decreasing proximal tubular protein reabsorption. Functionally, may have a role in cardio-renal homeostasis through regulation of diuresis and inhibiting aldosterone synthesis. In vitro, promotes the production of cGMP and induces vasodilation. May promote natriuresis, at least in part, by enhancing prostaglandin E2 synthesis resulting in the inhibition of renal Na+-K+-ATPase. May have a role in potassium excretion but not sodium excretion (natriuresis). Possibly enhances protein excretion in urine by decreasing proximal tubular protein reabsorption. Its function is as follows. Hormone produced in the kidneys that appears to be important for maintaining cardio-renal homeostasis. Mediates vasodilation, natriuresis and diuresis primarily in the renal system, in order to maintain the extracellular fluid volume and control the fluid-electrolyte balance. Specifically binds and stimulates cGMP production by renal transmembrane receptors, likely NPR1. Urodilatin not ANP, may be the natriuretic peptide responsible for the regulation of sodium and water homeostasis in the kidney. In terms of biological role, may have a role in cardio-renal homeostasis through regulation of natriuresis and vasodilation. In vivo promotes natriuresis and in vitro, vasodilates renal artery strips. May have a role in cardio-renal homeostasis through regulation of regulation of natriuresis and vasodilation. In vivo promotes natriuresis. In vitro, vasodilates intestinal smooth muscle but not smooth muscle strips. Functionally, may have a role in cardio-renal homeostasis through regulation of natriuresis and vasodilation. In vivo promotes natriuresis. In vitro, selectively vasodilates intestinal and vascular smooth muscle strips. Its function is as follows. May have a role in cardio-renal homeostasis through regulation of natriuresis and vasodilation. In vivo promotes natriuresis. In vitro, selectively vasodilates intestinal smooth muscle but not vascular smooth muscle strips. The chain is Natriuretic peptides A (NPPA) from Felis catus (Cat).